A 211-amino-acid chain; its full sequence is 5,6-dimethylbenzimidazole synthase (211 aa).

FMN contacts are provided by residues 22 to 26 (RRDVR), Ser50, Leu99, and Ser158.

It belongs to the BluB family. As to quaternary structure, homooctamer.

The enzyme catalyses FMNH2 + O2 = dialurate + 5,6-dimethylbenzimidazole + D-erythrose 4-phosphate + H(+). Functionally, involved in the biosynthesis of cobalamin (vitamin B12). Catalyzes the oxidative fragmentation and contraction of the isoalloxazine heterocycle and the cleavage of the ribityl tail of FMNH(2) to form 5,6-dimethylbenzimidazole (DMB) and D-erythrose 4-phosphate (E4P). NAD(P)H is only required initially to reduce FMN and oxygen drives the oxidative fragmentation. In Rhodospirillum rubrum (strain ATCC 11170 / ATH 1.1.1 / DSM 467 / LMG 4362 / NCIMB 8255 / S1), this protein is 5,6-dimethylbenzimidazole synthase.